The chain runs to 95 residues: Small ribosomal subunit protein uS19 (95 aa).

The protein belongs to the universal ribosomal protein uS19 family.

Functionally, protein S19 forms a complex with S13 that binds strongly to the 16S ribosomal RNA. The chain is Small ribosomal subunit protein uS19 from Myxococcus xanthus (strain DK1622).